A 308-amino-acid chain; its full sequence is Glutathione synthetase (308 aa).

Residues 117 to 300 form the ATP-grasp domain; that stretch reads KLLPLSFPKF…LERDCWDYFE (184 aa). 143–198 contributes to the ATP binding site; it reads YAEYGDIVLKPLYDYGGNGVCRICGRADVGAISSAMVERYEAPLVAQQFIDDISSD. Positions 271 and 273 each coordinate Mg(2+).

The protein belongs to the prokaryotic GSH synthase family. Mg(2+) is required as a cofactor. The cofactor is Mn(2+).

The enzyme catalyses gamma-L-glutamyl-L-cysteine + glycine + ATP = glutathione + ADP + phosphate + H(+). It participates in sulfur metabolism; glutathione biosynthesis; glutathione from L-cysteine and L-glutamate: step 2/2. The sequence is that of Glutathione synthetase from Anaplasma centrale.